The primary structure comprises 338 residues: 5-dehydro-2-deoxygluconokinase (338 aa).

The protein belongs to the carbohydrate kinase PfkB family.

The catalysed reaction is 5-dehydro-2-deoxy-D-gluconate + ATP = 6-phospho-5-dehydro-2-deoxy-D-gluconate + ADP + H(+). It participates in polyol metabolism; myo-inositol degradation into acetyl-CoA; acetyl-CoA from myo-inositol: step 5/7. Catalyzes the phosphorylation of 5-dehydro-2-deoxy-D-gluconate (2-deoxy-5-keto-D-gluconate or DKG) to 6-phospho-5-dehydro-2-deoxy-D-gluconate (DKGP). This Mesomycoplasma hyopneumoniae (strain J / ATCC 25934 / NCTC 10110) (Mycoplasma hyopneumoniae) protein is 5-dehydro-2-deoxygluconokinase.